The chain runs to 1227 residues: Splicing factor 3B subunit 3 (1227 aa).

The protein belongs to the RSE1 family. In terms of assembly, identified in the spliceosome A complex; remains associated with the spliceosome throughout the splicing process. Component of the spliceosome B complex. Identified in the spliceosome C complex. Identified in the spliceosome E complex. Component of the U11/U12 snRNPs that are part of the U12-type spliceosome. Component of splicing factor SF3B complex. Identified in the SAGA transcription regulatory histone acetylation (HAT) complex; the interaction is RNA-independent.

The protein resides in the nucleus. Functionally, involved in pre-mRNA splicing as a component of the splicing factor SF3B complex, a constituent of the spliceosome. SF3B complex is required for 'A' complex assembly formed by the stable binding of U2 snRNP to the branchpoint sequence (BPS) in pre-mRNA. Sequence independent binding of SF3A/SF3B complex upstream of the branch site is essential, it may anchor U2 snRNP to the pre-mRNA. May also be involved in the assembly of the 'E' complex. Also belongs to the minor U12-dependent spliceosome, which is involved in the splicing of rare class of nuclear pre-mRNA intron. The sequence is that of Splicing factor 3B subunit 3 from Drosophila melanogaster (Fruit fly).